Reading from the N-terminus, the 373-residue chain is 3-isopropylmalate dehydrogenase AMT6 (373 aa).

77 to 79 (VGG) is an NADP(+) binding site. Substrate is bound by residues Arg97 and Arg136. 3 residues coordinate Mg(2+): Asp227, Asp252, and Asp256. 284–289 (SRIRGL) is a binding site for NADP(+).

This sequence belongs to the isocitrate and isopropylmalate dehydrogenases family. Homodimer. Mg(2+) serves as cofactor. The cofactor is Mn(2+).

It carries out the reaction (2R,3S)-3-isopropylmalate + NAD(+) = 4-methyl-2-oxopentanoate + CO2 + NADH. Its pathway is amino-acid biosynthesis; L-leucine biosynthesis; L-leucine from 3-methyl-2-oxobutanoate: step 3/4. It functions in the pathway mycotoxin biosynthesis. Its function is as follows. 3-isopropylmalate dehydrogenase; part of the gene clusters that mediate the biosynthesis of AM-toxins, host-selective toxins (HSTs) causing Alternaria blotch on apple, a worldwide distributed disease. AM-toxins are cyclic depsipeptides containing the 3 residues 2-hydroxy-isovaleric acid (2-HIV), dehydroalanine, L-alanine which are common for all 3 AM-toxins I to III. The fourth precursor is L-alpha-amino-methoxyphenyl-valeric acid (L-Amv) for AM-toxin I, L-alpha-amino-phenyl-valeric acid (L-Apv) for AM-toxin II, and L-alpha-amino-hydroxyphenyl-valeric acid (L-Ahv) for AM-toxin III. AM-toxins have two target sites for affecting susceptible apple cells; they cause invagination of the plasma membrane and electrolyte loss and chloroplast disorganization. The non-ribosomal peptide synthetase AMT1 contains 4 catalytic modules and is responsible for activation of each residue in AM-toxin. The aldo-keto reductase AMT2 catalyzes the conversion of 2-keto-isovaleric acid (2-KIV) to 2-hydroxy-isovaleric acid (2-HIV), one of the precursor residues incorporated by AMT1 during AM-toxin biosynthesis, by reduction of its ketone to an alcohol. The cytochrome P450 monooxygenase AMT3 and the thioesterase AMT4 are also important for AM-toxin production, but their exact function within the AM-toxin biosynthesis are not known yet. Up to 21 proteins (including AMT1 to AMT4) are predicted to be involved in AM-toxin biosynthesis since their expression ishighly up-regulated in AM-toxin-producing cultures. This Alternaria alternata (Alternaria rot fungus) protein is 3-isopropylmalate dehydrogenase AMT6.